The chain runs to 224 residues: Urease accessory protein UreF 2 (224 aa).

It belongs to the UreF family. UreD, UreF and UreG form a complex that acts as a GTP-hydrolysis-dependent molecular chaperone, activating the urease apoprotein by helping to assemble the nickel containing metallocenter of UreC. The UreE protein probably delivers the nickel.

Its subcellular location is the cytoplasm. Functionally, required for maturation of urease via the functional incorporation of the urease nickel metallocenter. This is Urease accessory protein UreF 2 from Pseudomonas syringae pv. tomato (strain ATCC BAA-871 / DC3000).